The primary structure comprises 480 residues: Lysosomal protective protein (480 aa).

The first 28 residues, 1 to 28, serve as a signal peptide directing secretion; that stretch reads MIRAAPPPLFLLLLLLLLLVSWASRGEA. 4 disulfide bridges follow: C88-C362, C240-C256, C241-C246, and C281-C331. N145 carries N-linked (GlcNAc...) asparagine glycosylation. Residue S178 is part of the active site. The N-linked (GlcNAc...) asparagine glycan is linked to N333. Active-site residues include D400 and H457.

Belongs to the peptidase S10 family. Heterodimer of a 32 kDa chain and a 20 kDa chain; disulfide-linked.

It is found in the lysosome. It carries out the reaction Release of a C-terminal amino acid with broad specificity.. Protective protein appears to be essential for both the activity of beta-galactosidase and neuraminidase, it associates with these enzymes and exerts a protective function necessary for their stability and activity. This protein is also a carboxypeptidase and can deamidate tachykinins. This is Lysosomal protective protein (CTSA) from Homo sapiens (Human).